The following is a 506-amino-acid chain: Trans-cinnamate 4-monooxygenase (506 aa).

The chain crosses the membrane as a helical span at residues 3–23; the sequence is LLLLEKTLLALFIAATIAVTI. (E)-cinnamate-binding positions include 213–218 and A307; that span reads RSRLAQ. C448 serves as a coordination point for heme.

It belongs to the cytochrome P450 family. Heme serves as cofactor.

The protein resides in the membrane. It catalyses the reaction (E)-cinnamate + reduced [NADPH--hemoprotein reductase] + O2 = (E)-4-coumarate + oxidized [NADPH--hemoprotein reductase] + H2O + H(+). It participates in phenylpropanoid metabolism; trans-4-coumarate biosynthesis; trans-4-coumarate from trans-cinnamate: step 1/1. Catalyzes the first oxidative step of the phenylpropanoid pathway in higher plants by transforming trans-cinnamate into p-coumarate. The compounds formed by this pathway are essential components for lignification, pollination, and defense against ultraviolet light, predators and pathogens. This chain is Trans-cinnamate 4-monooxygenase (CYP73A3), found in Medicago sativa (Alfalfa).